Reading from the N-terminus, the 423-residue chain is Serine--tRNA ligase (423 aa).

L-serine is bound at residue 231 to 233 (TAE). 262–264 (RSE) serves as a coordination point for ATP. Residue glutamate 285 coordinates L-serine. 349–352 (EISS) serves as a coordination point for ATP. Serine 384 contacts L-serine.

This sequence belongs to the class-II aminoacyl-tRNA synthetase family. Type-1 seryl-tRNA synthetase subfamily. As to quaternary structure, homodimer. The tRNA molecule binds across the dimer.

It localises to the cytoplasm. The enzyme catalyses tRNA(Ser) + L-serine + ATP = L-seryl-tRNA(Ser) + AMP + diphosphate + H(+). It carries out the reaction tRNA(Sec) + L-serine + ATP = L-seryl-tRNA(Sec) + AMP + diphosphate + H(+). It participates in aminoacyl-tRNA biosynthesis; selenocysteinyl-tRNA(Sec) biosynthesis; L-seryl-tRNA(Sec) from L-serine and tRNA(Sec): step 1/1. Functionally, catalyzes the attachment of serine to tRNA(Ser). Is also able to aminoacylate tRNA(Sec) with serine, to form the misacylated tRNA L-seryl-tRNA(Sec), which will be further converted into selenocysteinyl-tRNA(Sec). This chain is Serine--tRNA ligase, found in Acinetobacter baylyi (strain ATCC 33305 / BD413 / ADP1).